A 683-amino-acid chain; its full sequence is Transcription factor SFP1 (683 aa).

Disordered regions lie at residues 156-178 (ATNT…PYHR), 305-324 (DSNS…NIIQ), 332-357 (VNHT…TANP), 399-420 (SNSP…NSGI), 498-517 (HNSM…YNTF), and 535-573 (IDDI…NNYK). Positions 160 to 173 (LQIQQPTKRPSVSN) are enriched in polar residues. The tract at residues 230-458 (NTTNMSQIPM…NYSLNKTSRN (229 aa)) is prion domain (PrD). Over residues 535 to 557 (IDDIDDDDDVDDDDDDDDDDDTE) the composition is skewed to acidic residues. The span at 558–573 (NGSSSNGKSVHNNNYK) shows a compositional bias: polar residues. 2 C2H2-type zinc fingers span residues 598-623 (FKCP…LHGH) and 659-683 (YRCE…HSTH).

As to quaternary structure, interacts with the target of rapamycin complex 1 (TORC1) in a rapamycin-dependent manner. Interacts with MRS6. Phosphorylated by TORC1 kinase at multiple sites. Phosphorylation regulates nuclear localization and RP promoter binding.

The protein localises to the cytoplasm. Its subcellular location is the nucleus. Functionally, transcription factor that regulates ribosomal protein (RP) and ribosome biogenesis (Ribi) gene expression in response to nutrients and stress. Promotes RP gene expression under optimal growth conditions. Leaves the nucleus upon environmental challenges, resulting in a down-regulation of RP gene transcription. The effect of the environmental cues on SFP1 localization is mediated through the TOR pathway. Also regulates the expression of genes involved in the G2/M transition during the mitotic cell cycle and the DNA-damage response. Required for carbon-source modulation of cell size. This is Transcription factor SFP1 (SFP1) from Saccharomyces cerevisiae (strain ATCC 204508 / S288c) (Baker's yeast).